The following is a 428-amino-acid chain: 3-phosphoshikimate 1-carboxyvinyltransferase (428 aa).

Positions 23, 24, and 28 each coordinate 3-phosphoshikimate. Residue Lys-23 coordinates phosphoenolpyruvate. 2 residues coordinate phosphoenolpyruvate: Gly-97 and Arg-125. 3-phosphoshikimate contacts are provided by Ser-170, Ser-171, Gln-172, Ser-198, Asp-314, Asn-337, and Lys-341. Phosphoenolpyruvate is bound at residue Gln-172. Asp-314 serves as the catalytic Proton acceptor. Positions 345, 387, and 412 each coordinate phosphoenolpyruvate.

It belongs to the EPSP synthase family. In terms of assembly, monomer.

It localises to the cytoplasm. It catalyses the reaction 3-phosphoshikimate + phosphoenolpyruvate = 5-O-(1-carboxyvinyl)-3-phosphoshikimate + phosphate. Its pathway is metabolic intermediate biosynthesis; chorismate biosynthesis; chorismate from D-erythrose 4-phosphate and phosphoenolpyruvate: step 6/7. Its function is as follows. Catalyzes the transfer of the enolpyruvyl moiety of phosphoenolpyruvate (PEP) to the 5-hydroxyl of shikimate-3-phosphate (S3P) to produce enolpyruvyl shikimate-3-phosphate and inorganic phosphate. The chain is 3-phosphoshikimate 1-carboxyvinyltransferase from Erwinia tasmaniensis (strain DSM 17950 / CFBP 7177 / CIP 109463 / NCPPB 4357 / Et1/99).